The following is a 391-amino-acid chain: MKKVSVLGSTGSIGKKTVDLLLKRKEEYQVEALSANSNFALLAQQANLLNAKYAAISDERFYKDLKEDLLGTNVKVEVGAPGLANVASLPVDLSVIAIVGIAGLEPVIKVIESGTKVIALANKESIVCGGKLLLKKAKERSVQIIPIDSEHNAIFQVLQNDDKCVEKIILTASGGPFLNYSLEQLRNITVNQALSHPTWKMGKKISVDSATMMNKALEIIEAHHLFKISPNRIEAVVHPESIVHGVVVYQDGFSFAVLAETDMEIPIAYALSWPERSTLNYKLDLTKQKKLTFQEPDHKCFSSLKLSMEVLNSSSPHTNSIVLNAANEIAVNEFLKSRIGFLEVVEVVKSTIENFDKYSDINSLSDIISVDFESRILANEIIKSKGICSVE.

The NADPH site is built by T10, G11, S12, I13, N38, and N122. K123 is a 1-deoxy-D-xylulose 5-phosphate binding site. E124 provides a ligand contact to NADPH. Residue D148 participates in Mn(2+) binding. Residues S149, E150, S173, and H196 each contribute to the 1-deoxy-D-xylulose 5-phosphate site. E150 contributes to the Mn(2+) binding site. G202 lines the NADPH pocket. The 1-deoxy-D-xylulose 5-phosphate site is built by S209, N214, K215, and E218. E218 contributes to the Mn(2+) binding site.

The protein belongs to the DXR family. Mg(2+) is required as a cofactor. The cofactor is Mn(2+).

The enzyme catalyses 2-C-methyl-D-erythritol 4-phosphate + NADP(+) = 1-deoxy-D-xylulose 5-phosphate + NADPH + H(+). Its pathway is isoprenoid biosynthesis; isopentenyl diphosphate biosynthesis via DXP pathway; isopentenyl diphosphate from 1-deoxy-D-xylulose 5-phosphate: step 1/6. Functionally, catalyzes the NADPH-dependent rearrangement and reduction of 1-deoxy-D-xylulose-5-phosphate (DXP) to 2-C-methyl-D-erythritol 4-phosphate (MEP). This is 1-deoxy-D-xylulose 5-phosphate reductoisomerase from Wolbachia pipientis subsp. Culex pipiens (strain wPip).